A 544-amino-acid polypeptide reads, in one-letter code: Chitin-inducible gibberellin-responsive protein 2 (544 aa).

The interval 1–123 is disordered; that stretch reads MADTPTSRMI…VGASCVTEDP (123 aa). Composition is skewed to polar residues over residues 15–30, 63–74, and 86–101; these read NIPS…SDNP, SQATPNKYTLDS, and PSSQ…PLSQ. One can recognise a GRAS domain in the interval 165-544; it reads RMMGIPRGNL…RPLVVSSAWH (380 aa). Residues 172-232 form a leucine repeat I (LRI) region; that stretch reads GNLKELLIAC…VARLASSGIS (61 aa). The segment at 251 to 316 is VHIID; the sequence is MHFLYEACPY…GGPPTVRITG (66 aa). The short motif at 282–286 is the VHIID element; that stretch reads IHIID. The leucine repeat II (LRII) stretch occupies residues 332–364; that stretch reads LVGRRLSHIASLCKVPFEFHPLAISGSKVEAAH. Residues 373–467 are PFYRE; it reads LAVNFTLELH…QHCLAREIVN (95 aa). The tract at residues 470–544 is SAW; the sequence is ACEGEERAER…RPLVVSSAWH (75 aa).

The protein belongs to the GRAS family.

It localises to the nucleus. Its function is as follows. May play a regulatory role in the early step of oligosaccharide elicitor response, downstream of the membrane-associated high-affinity chitin-binding protein. The polypeptide is Chitin-inducible gibberellin-responsive protein 2 (CIGR2) (Oryza sativa subsp. japonica (Rice)).